Here is a 1582-residue protein sequence, read N- to C-terminus: Hybrid PKS-NRPS synthetase TAS1 (1582 aa).

Residues 33–387 (IPLSKVQEVL…GEDTAAASRV (355 aa)) form a condensation (C) domain region. An adenylation (A) domain region spans residues 499-892 (RSRAATQPDE…KLHILGRMNN (394 aa)). Residues 1015–1092 (NLVDRLEASI…RQAQRLSELV (78 aa)) form the Carrier domain. One can recognise a Ketosynthase family 3 (KS3) domain in the interval 1127-1574 (APLFAIVGMA…GVNAHCILAS (448 aa)). Active-site for beta-ketoacyl synthase activity residues include Cys-1294 and His-1432. A disordered region spans residues 1460–1485 (ESRCSSGAISPTGTEQQPSDTKQTPR). Positions 1462 to 1485 (RCSSGAISPTGTEQQPSDTKQTPR) are enriched in polar residues. Asn-1498 acts as the For beta-ketoacyl synthase activity in catalysis.

In the N-terminal section; belongs to the NRP synthetase family. Pantetheine 4'-phosphate serves as cofactor.

It carries out the reaction acetoacetyl-CoA + L-isoleucine + ATP = tenuazonic acid + AMP + diphosphate + CoA + 2 H(+). In terms of biological role, hybrid PKS-NRPS synthetase that mediates the biosynthesis of the toxin tenuazonic acid (TeA), an inhibitor of protein biosynthesis on ribosomes by suppressing the release of new protein. TAS1 alone is sufficient for TeA synthesis via the condensation of isoleucine (Ile) with acetoacetyl-CoA by the N-terminal NRPS module and subsequent cyclization conducted by the C-terminal KS domain. This chain is Hybrid PKS-NRPS synthetase TAS1, found in Cordyceps militaris (strain CM01) (Caterpillar fungus).